Here is a 120-residue protein sequence, read N- to C-terminus: Large ribosomal subunit protein bL12 (120 aa).

The protein belongs to the bacterial ribosomal protein bL12 family. As to quaternary structure, homodimer. Part of the ribosomal stalk of the 50S ribosomal subunit. Forms a multimeric L10(L12)X complex, where L10 forms an elongated spine to which 2 to 4 L12 dimers bind in a sequential fashion. Binds GTP-bound translation factors.

In terms of biological role, forms part of the ribosomal stalk which helps the ribosome interact with GTP-bound translation factors. Is thus essential for accurate translation. The polypeptide is Large ribosomal subunit protein bL12 (Lactobacillus helveticus (strain DPC 4571)).